A 677-amino-acid chain; its full sequence is Gamma-tubulin complex subunit mod21 (677 aa).

In terms of assembly, component of the gamma-tubulin complex composed of at least alp4, alp6, alp16, ghf1, gtb1 and mod21.

The protein resides in the cytoplasm. The protein localises to the cytoskeleton. Its subcellular location is the microtubule organizing center. It localises to the spindle pole body. Component of the gamma-tubulin complex that is required for the regulation of both interphase microtubule organization and nucleation, and mitotic bipolar spindles. Required for correct septation. This chain is Gamma-tubulin complex subunit mod21, found in Schizosaccharomyces pombe (strain 972 / ATCC 24843) (Fission yeast).